A 322-amino-acid chain; its full sequence is 6-deoxy-6-sulfo-D-fructose transketolase subunit SqwH (322 aa).

This sequence belongs to the transketolase family. Forms a complex with SqwG. Requires thiamine diphosphate as cofactor.

It carries out the reaction 6-deoxy-6-sulfo-D-fructose + D-glyceraldehyde 3-phosphate = 4-deoxy-4-sulfo-D-erythrose + D-xylulose 5-phosphate. It catalyses the reaction 4-deoxy-4-sulfo-D-erythrulose + D-glyceraldehyde 3-phosphate = sulfoacetaldehyde + D-xylulose 5-phosphate. In terms of biological role, part of the sulfo-TK pathway, a D-sulfoquinovose degradation pathway that produces 2-hydroxyethane-1-sulfonate (isethionate). Catalyzes two steps of the pathway: the formation of 4-deoxy-4-sulfoerythrose (SE) and xylulose 5-phosphate from 6-deoxy-6-sulfo-D-fructose (SF) and glyceraldehyde 3-phosphate, and the formation of sulfoacetaldehyde (SA) and xylulose 5-phosphate from 4-deoxy-4-sulfo-D-erythrulose (SEu) and glyceraldehyde 3-phosphate. This Clostridium sp. (strain MSTE9) protein is 6-deoxy-6-sulfo-D-fructose transketolase subunit SqwH.